A 967-amino-acid chain; its full sequence is Muscular LMNA-interacting protein (967 aa).

At Ser129 the chain carries Phosphoserine. Disordered regions lie at residues 132 to 154, 302 to 336, 432 to 462, 506 to 628, 644 to 685, 786 to 838, and 929 to 967; these read EDEATCRQGEQGPPGGPGNIATR, GLASEAQKKMSTSNVLNPKEDVRTCPAPASGASLT, QKVKQTPPTSKKSLSSGSLTTGSTEQEHQAS, GSTL…SASH, QTLQ…TPSL, SMHS…SQLT, and FSVRDEQEKSPTLLSQDTYNKLGHPMVTIPEHDTLDSKE. The tract at residues 144-811 is required for interaction with ISL1; sequence PPGGPGNIAT…GSETIKTPTT (668 aa). The span at 437-455 shows a compositional bias: low complexity; that stretch reads TPPTSKKSLSSGSLTTGST. Residues 508–523 are compositionally biased toward polar residues; it reads TLRSNTTSPQPQTDTF. Residues 528–541 are compositionally biased toward low complexity; the sequence is VPSVTPVLSPLSSS. The segment covering 543 to 556 has biased composition (basic and acidic residues); the sequence is GRKDGDSRTPEKNR. 2 stretches are compositionally biased toward polar residues: residues 558–567 and 658–685; these read ICIQPSTLAS and GSATCPSRTQMPENTASNHSSRVSTPSL. Ser792 is modified (phosphoserine). A compositionally biased stretch (polar residues) spans 800-811; it reads MLGSETIKTPTT. The span at 826–835 shows a compositional bias: low complexity; sequence SSSSSTASES. Residues 938–947 show a composition bias toward polar residues; it reads SPTLLSQDTY. Basic and acidic residues predominate over residues 958 to 967; that stretch reads PEHDTLDSKE.

As to quaternary structure, directly interacts with LMNA. Interacts with ISL1 (via N-terminal domain); the interaction represses ISL1 transactivator activity. Interactions of ISL1 with MLIP1 and GCN5/KAT2A may be mutually exclusive. May be ubiquitinated by UBE3C ubiquitin ligase; ubiquitination is followed by protein degradation. Predominantly expressed in the heart and skeletal muscle, but detected at lower levels in the lung and brain (at protein level). Also detected in smooth muscle, thymus and kidney. In brain, expressed by a subpopulation of cells within the hippocampus and cortex. In heart, expressed by cardiomyocytes. Expression is reduced in hypertrophic hearts at the transcript level. However, expression in hypertrophic hearts induced by transverse aortic constriction do not differ from control at the protein level.

It localises to the nucleus. The protein localises to the nucleus envelope. It is found in the PML body. The protein resides in the cytoplasm. Its subcellular location is the cytosol. It localises to the cell membrane. The protein localises to the sarcolemma. In terms of biological role, required for myoblast differentiation into myotubes, possibly acting as a transcriptional regulator of the myogenic program. Required for cardiac adaptation to stress through integrated regulation of the AKT/mTOR pathways and FOXO1. Regulates cardiac homeostasis and plays a role in the protection against cardiac hypertrophy. Binds chromatin. May act as a transcriptional cofactor for ISL1, repressing its transcriptional activity. May also repress MYOCD transcriptional activity. This Mus musculus (Mouse) protein is Muscular LMNA-interacting protein.